A 401-amino-acid polypeptide reads, in one-letter code: MDHEDVTRRAVEKKNKLASSLIHAPFAICGLCWAFVYQKLIYKQTYTDTHARNYKVPARFQLPDPLLTQILNHLPTEEAVKTSVLSTRWRTLWLWVHNLELSFSKFSSFNAFLSFGNWFFDSDRVSCIESLKLSLDGNDASYLKPWIDAFVKRKIQRLHVRLTQGCEMPLSLYRLVSSCPVLEELKIDVVWMDGRVYRVHSRSLKSFILTDLESDAKFDISLRFHKWVFNEAKTSTIHMFLAWISRVRDMTICAQTFKLIHHYSESVQLPQFGYMSSLYITLNASDLKWFPIFLRSIPNLKSLILVMERTGSSHQLSPKAIKRVSISSVPECLLSSLEFVEFKAPICGLAPEMMLVWYFLENSPTLKKLTLRLKSHSTKDDFVKKLLKIPRCSTECEVIFL.

Residues 56 to 102 (VPARFQLPDPLLTQILNHLPTEEAVKTSVLSTRWRTLWLWVHNLELS) enclose the F-box domain. LRR repeat units lie at residues 128–152 (IESLKLSLDGNDASYLKPWIDAFVK) and 275–296 (MSSLYITLNASDLKWFPIFLRS). The 53-residue stretch at 321–373 (IKRVSISSVPECLLSSLEFVEFKAPICGLAPEMMLVWYFLENSPTLKKLTLRL) folds into the FBD domain.

This chain is Putative F-box/FBD/LRR-repeat protein At3g23955, found in Arabidopsis thaliana (Mouse-ear cress).